We begin with the raw amino-acid sequence, 111 residues long: Inner membrane protein YdgC (111 aa).

Residues 1 to 26 lie on the Cytoplasmic side of the membrane; sequence MGLVIKAALGALVVLLIGVLAKTKNY. A helical membrane pass occupies residues 27-47; it reads YIAGLIPLFPTFALIAHYIVA. Over 48-58 the chain is Periplasmic; sequence SERGIEALRAT. A helical transmembrane segment spans residues 59-79; that stretch reads IIFSMWSIIPYFVYLVSLWYF. The Cytoplasmic segment spans residues 80–87; sequence TGMMRLPA. Residues 88-108 traverse the membrane as a helical segment; it reads AFVGSVACWGISAWVLIICWI. Topologically, residues 109-111 are periplasmic; sequence KLH.

It to P.aeruginosa GlpM.

It localises to the cell inner membrane. This chain is Inner membrane protein YdgC (ydgC), found in Escherichia coli O157:H7.